Consider the following 391-residue polypeptide: Saxitoxin and tetrodotoxin-binding protein 2 (391 aa).

Residues Met-1–Ala-20 form the signal peptide. Tandem repeats lie at residues Pro-24 to Ser-202 and Pro-203 to Asp-391. N-linked (GlcNAc...) asparagine glycosylation is found at Asn-41, Asn-54, Asn-63, Asn-97, Asn-234, Asn-268, Asn-277, and Asn-307.

As to quaternary structure, homodimer or heterodimer of PSTBP1 and PSTBP2. In terms of processing, glycosylated.

It localises to the secreted. In terms of biological role, binds both saxitoxin and tetradotoxin. May play a role in toxin accumulation and/or excretion. This Takifugu pardalis (Panther puffer) protein is Saxitoxin and tetrodotoxin-binding protein 2 (psbp2).